The sequence spans 242 residues: Uridylate kinase (242 aa).

Position 16–19 (16–19) interacts with ATP; sequence KVSG. Gly58 contacts UMP. The ATP site is built by Gly59 and Arg63. UMP is bound by residues Asp78 and 139 to 146; that span reads TGNPFCTT. 4 residues coordinate ATP: Thr166, Gln167, Tyr172, and Asp175.

This sequence belongs to the UMP kinase family. Homohexamer.

The protein resides in the cytoplasm. It catalyses the reaction UMP + ATP = UDP + ADP. The protein operates within pyrimidine metabolism; CTP biosynthesis via de novo pathway; UDP from UMP (UMPK route): step 1/1. Its activity is regulated as follows. Inhibited by UTP. Its function is as follows. Catalyzes the reversible phosphorylation of UMP to UDP. The polypeptide is Uridylate kinase (Rickettsia felis (strain ATCC VR-1525 / URRWXCal2) (Rickettsia azadi)).